Reading from the N-terminus, the 60-residue chain is Large ribosomal subunit protein bL32 (60 aa).

A compositionally biased stretch (basic residues) spans 1-16 (MAVPRRKTSPSRRGMR). Residues 1-60 (MAVPRRKTSPSRRGMRRSADAIKKPTYVEDKDSGELRRPHHLDLKTGMYKGRQVLKKKES) form a disordered region. Positions 17 to 44 (RSADAIKKPTYVEDKDSGELRRPHHLDL) are enriched in basic and acidic residues.

It belongs to the bacterial ribosomal protein bL32 family.

In Bradyrhizobium diazoefficiens (strain JCM 10833 / BCRC 13528 / IAM 13628 / NBRC 14792 / USDA 110), this protein is Large ribosomal subunit protein bL32.